The chain runs to 1404 residues: DNA-directed RNA polymerase subunit beta' (1404 aa).

4 residues coordinate Zn(2+): C70, C72, C85, and C88. Residues D460, D462, and D464 each coordinate Mg(2+). 4 residues coordinate Zn(2+): C814, C888, C895, and C898.

Belongs to the RNA polymerase beta' chain family. In terms of assembly, the RNAP catalytic core consists of 2 alpha, 1 beta, 1 beta' and 1 omega subunit. When a sigma factor is associated with the core the holoenzyme is formed, which can initiate transcription. The cofactor is Mg(2+). Requires Zn(2+) as cofactor.

It carries out the reaction RNA(n) + a ribonucleoside 5'-triphosphate = RNA(n+1) + diphosphate. Functionally, DNA-dependent RNA polymerase catalyzes the transcription of DNA into RNA using the four ribonucleoside triphosphates as substrates. The polypeptide is DNA-directed RNA polymerase subunit beta' (Shewanella loihica (strain ATCC BAA-1088 / PV-4)).